Reading from the N-terminus, the 435-residue chain is Nuclear receptor subfamily 6 group A member 1 (435 aa).

The segment at residues 11–86 (QRACLICGDR…MGMNRKAIRE (76 aa)) is a DNA-binding region (nuclear receptor). NR C4-type zinc fingers lie at residues 14-34 (CLIC…CEGC) and 50-69 (CSRD…CQYC). Positions 84-157 (IREDGMPGGR…VSTPSSSRSM (74 aa)) are disordered. Residues 121–141 (NTSWSNNGDSDHSSPGNGVSE) are compositionally biased toward polar residues. Low complexity predominate over residues 142 to 156 (SNQPSPVSTPSSSRS). One can recognise an NR LBD domain in the interval 204-435 (QSHTLINQLL…HSCKTSLTKE (232 aa)).

It belongs to the nuclear hormone receptor family. NR6 subfamily. In terms of assembly, homodimer.

It localises to the cytoplasm. It is found in the nucleus. In terms of biological role, probable orphan nuclear receptor. Binds to a response element containing repeats of the motif 5'-AGGTCA-3'. Required for anterior-posterior patterning during organogenesis. Acts with chordin to play a role in patterning the midbrain-hindbrain. Isoform Em is required for integrin-mediated cell matrix interaction during neurulation and for the morphogenetic movements leading to formation of the neural tube. Also mediates the effect of retinoic acid on primary neurogenesis. In Xenopus tropicalis (Western clawed frog), this protein is Nuclear receptor subfamily 6 group A member 1.